The chain runs to 442 residues: MPKLFGTDGVRGVANEDLTPELCLKIGRAAGEYLKSYGDTVLVGRDTRLSGTMLEAALSAGLASVGLKVERLGIVTTPAVAFLASREDVAGGAMISASHNPVPDNGVKFFDNKGYKLAESHEEQIENYLEKELSRPTGTDIGKVLPENNKLIENYIQELIDKYPLDLSNYKIVLDCAYGATYQIAPRLFKKLGAEIIPLHAENRGEKINVECGSTNPELTSRTVVEEGADLGFSFDGDGDRIIALDEEGNQVNGDKIMAILAKDMKSRGELKNDKLIATVMSNLGLKLALKELGIALEETKVGDRNVLNRMREQDCVLGGEQSGHIINLQDNTTGDGVLTGLKLMKVLIDTGQSLKQLASIMEELPQLLVNVKVSNKDSAINSQKVQEEKSKVEKQLGSKGRVLIRPSGTEPVIRVMVEGENRETLHEVANHLTQVIKKAAE.

Serine 98 (phosphoserine intermediate) is an active-site residue. Mg(2+) is bound by residues serine 98, aspartate 236, aspartate 238, and aspartate 240. Serine 98 is modified (phosphoserine).

Belongs to the phosphohexose mutase family. It depends on Mg(2+) as a cofactor. Activated by phosphorylation.

The enzyme catalyses alpha-D-glucosamine 1-phosphate = D-glucosamine 6-phosphate. In terms of biological role, catalyzes the conversion of glucosamine-6-phosphate to glucosamine-1-phosphate. In Natranaerobius thermophilus (strain ATCC BAA-1301 / DSM 18059 / JW/NM-WN-LF), this protein is Phosphoglucosamine mutase.